Reading from the N-terminus, the 307-residue chain is MKITVEDIIKDLELEVLVQGEKDKEIKTSDINRPGLQFAGFYSYFANSRVQVIGNAEWSFLKNMPVELIRKRMKKFFEFDTPCIIIARDLEPHPQLIKNAKLHKRWVLRSKLLTTKVVTKLMNYLDAKLAPETRMHGVLVDVYGIGMLITGESGIGKSETALELIKRGHRLVADDAVDIKEIDGVLRGTSPYITSGMLEVRGMGIIDIPALYGLSSVLQKKTIHLVIYLEQWKPDRNYDRLGIDDDFLEILNVPVKKLTVPIRPGRNLAVIIEAAAANYRYGLMCKVSPVETINNRMESMVRNESKR.

Active-site residues include histidine 136 and lysine 157. 151–158 (GESGIGKS) contacts ATP. Serine 158 provides a ligand contact to Mg(2+). Aspartate 175 serves as the catalytic Proton acceptor; for phosphorylation activity. Proton donor; for dephosphorylation activity. The interval 198 to 207 (LEVRGMGIID) is important for the catalytic mechanism of both phosphorylation and dephosphorylation. Glutamate 199 is a binding site for Mg(2+). Arginine 240 is a catalytic residue. An important for the catalytic mechanism of dephosphorylation region spans residues 261–266 (PIRPGR).

It belongs to the HPrK/P family. In terms of assembly, homohexamer. Requires Mg(2+) as cofactor.

The catalysed reaction is [HPr protein]-L-serine + ATP = [HPr protein]-O-phospho-L-serine + ADP + H(+). The enzyme catalyses [HPr protein]-O-phospho-L-serine + phosphate + H(+) = [HPr protein]-L-serine + diphosphate. In terms of biological role, catalyzes the ATP- as well as the pyrophosphate-dependent phosphorylation of a specific serine residue in HPr, a phosphocarrier protein of the phosphoenolpyruvate-dependent sugar phosphotransferase system (PTS). HprK/P also catalyzes the pyrophosphate-producing, inorganic phosphate-dependent dephosphorylation (phosphorolysis) of seryl-phosphorylated HPr (P-Ser-HPr). The two antagonistic activities of HprK/P are regulated by several intracellular metabolites, which change their concentration in response to the absence or presence of rapidly metabolisable carbon sources (glucose, fructose, etc.) in the growth medium. Therefore, by controlling the phosphorylation state of HPr, HPrK/P is a sensor enzyme that plays a major role in the regulation of carbon metabolism and sugar transport: it mediates carbon catabolite repression (CCR), and regulates PTS-catalyzed carbohydrate uptake and inducer exclusion. The sequence is that of HPr kinase/phosphorylase from Clostridium novyi (strain NT).